Reading from the N-terminus, the 117-residue chain is Appetite-regulating hormone (117 aa).

An N-terminal signal peptide occupies residues 1–23 (MVSSATICSLLLLSMLWMDMAMA). The O-decanoyl serine; alternate moiety is linked to residue S26. S26 carries O-hexanoyl serine; alternate lipidation. The O-octanoyl serine; alternate moiety is linked to residue S26. Residues 28–68 (LSPEHQKAQQRKESKKPPAKLQPRALEGWLHPEDRGQAEEA) form a disordered region. Basic and acidic residues predominate over residues 31–43 (EHQKAQQRKESKK). A propeptide spans 52 to 75 (ALEGWLHPEDRGQAEEAEEELEIR) (removed in mature form). L98 is modified (leucine amide). Residues 99–117 (GKFLQDILWEEVKEAPANK) constitute a propeptide, removed in mature form.

The protein belongs to the motilin family. In terms of processing, O-octanoylated by GOAT/MBOAT4. O-octanoylation is essential for ghrelin activity. The replacement of Ser-26 by aromatic tryptophan preserves ghrelin activity. Amidation of Leu-98 is essential for obestatin activity. As to expression, ghrelin is broadly expressed with higher expression in the stomach. Very low levels are detected in the hypothalamus, heart, lung, pancreas, intestine and adipose tissue. Obestatin is most highly expressed in jejunum, and also found in duodenum, stomach, pituitary, ileum, liver, hypothalamus and heart. Expressed in low levels in pancreas, cerebellum, cerebrum, kidney, testis, ovary colon and lung.

It localises to the secreted. Ghrelin is the ligand for growth hormone secretagogue receptor type 1 (GHSR). Induces the release of growth hormone from the pituitary. Has an appetite-stimulating effect, induces adiposity and stimulates gastric acid secretion. Involved in growth regulation. In terms of biological role, obestatin may be the ligand for GPR39. May have an appetite-reducing effect resulting in decreased food intake. May reduce gastric emptying activity and jejunal motility. This is Appetite-regulating hormone (Ghrl) from Rattus norvegicus (Rat).